A 354-amino-acid chain; its full sequence is 2-methylisoborneol synthase (354 aa).

The disordered stretch occupies residues 1 to 29; sequence MIELIGHETPVPSQQQHTGGVRGTSACTP. 6 residues coordinate Mg(2+): D113, D114, E118, N264, S268, and E272.

This sequence belongs to the terpene synthase family. 2-methylisoborneol synthase subfamily. The cofactor is Mg(2+).

It catalyses the reaction (E)-2-methylgeranyl diphosphate + H2O = 2-methylisoborneol + diphosphate. Catalyzes the cyclization of 2-methylgeranyl diphosphate (2-MeGPP) to 2-methylisoborneol (2-MIB), which likely involves the intermediacy of 2-methyllinalyl diphosphate. This Saccharopolyspora erythraea (strain ATCC 11635 / DSM 40517 / JCM 4748 / NBRC 13426 / NCIMB 8594 / NRRL 2338) protein is 2-methylisoborneol synthase.